The sequence spans 331 residues: Biotin synthase (331 aa).

The Radical SAM core domain occupies 39 to 264; it reads SELQTCYLIS…VFPRSMVRLA (226 aa). The [4Fe-4S] cluster site is built by Cys-54, Cys-58, and Cys-61. [2Fe-2S] cluster is bound by residues Cys-98, Cys-130, Cys-190, and Arg-262.

It belongs to the radical SAM superfamily. Biotin synthase family. Homodimer. Requires [4Fe-4S] cluster as cofactor. [2Fe-2S] cluster is required as a cofactor.

It carries out the reaction (4R,5S)-dethiobiotin + (sulfur carrier)-SH + 2 reduced [2Fe-2S]-[ferredoxin] + 2 S-adenosyl-L-methionine = (sulfur carrier)-H + biotin + 2 5'-deoxyadenosine + 2 L-methionine + 2 oxidized [2Fe-2S]-[ferredoxin]. It participates in cofactor biosynthesis; biotin biosynthesis; biotin from 7,8-diaminononanoate: step 2/2. Its function is as follows. Catalyzes the conversion of dethiobiotin (DTB) to biotin by the insertion of a sulfur atom into dethiobiotin via a radical-based mechanism. This Chlamydia pneumoniae (Chlamydophila pneumoniae) protein is Biotin synthase.